Consider the following 232-residue polypeptide: Chalcone--flavanone isomerase (232 aa).

Residues Thr-50 and Ser-192 each contribute to the substrate site.

This sequence belongs to the chalcone isomerase family.

The catalysed reaction is a chalcone = a flavanone.. It functions in the pathway secondary metabolite biosynthesis; flavonoid biosynthesis. Catalyzes the intramolecular cyclization of bicyclic chalcones into tricyclic (S)-flavanones. Responsible for the isomerization of 4,2',4',6'-tetrahydroxychalcone (also termed chalcone) into naringenin. This Saussurea medusa (Saw-wort) protein is Chalcone--flavanone isomerase (CHI).